Here is a 1055-residue protein sequence, read N- to C-terminus: Elongation factor 3 (1055 aa).

V45 provides a ligand contact to ADP. 7 HEAT repeats span residues 48-86 (FTQI…NGAA), 96-133 (SAEN…SMNP), 134-172 (WASF…SAPF), 176-213 (EAMP…LVEN), 218-255 (KFVP…APTI), 257-290 (LIAP…LVDS), and 296-337 (PFLP…VPAE). ABC transporter domains lie at 447-659 (CNIE…SYYQ) and 687-1004 (LKMR…KKAA). Residues N723, E933, N936, and H962 each coordinate ADP. The interval 1024-1055 (EKKLSAADKRKAKKDRMARRKRGEEVFSDEEL) is disordered. Residues 1033–1044 (RKAKKDRMARRK) show a composition bias toward basic residues.

Belongs to the ABC transporter superfamily. ABCF family. EF3 subfamily. As to quaternary structure, interacts with CCH1; the interaction is direct and required for the localization of CCH1 to the cell membrane.

It localises to the cytoplasm. It is found in the cytosol. The enzyme catalyses ATP + H2O = ADP + phosphate + H(+). Its pathway is protein biosynthesis; polypeptide chain elongation. Its function is as follows. Ribosome-dependent ATPase that functions in cytoplasmic translation elongation. Required for the ATP-dependent release of deacylated tRNA from the ribosomal E-site during protein biosynthesis. Stimulates the eEF1A-dependent binding of aminoacyl-tRNA to the ribosomal A-site, which has reduced affinity for tRNA as long as the E-site is occupied. Assists translation termination by stimulating the release of nascent protein from the ribosome by release factors. Appears to localize calcium-channel protein CCH1 to the plasma membrane. The protein is Elongation factor 3 of Cryptococcus neoformans var. grubii serotype A (strain H99 / ATCC 208821 / CBS 10515 / FGSC 9487) (Filobasidiella neoformans var. grubii).